The sequence spans 214 residues: Adenylate kinase (214 aa).

An ATP-binding site is contributed by 10 to 15; sequence GAGKGT. Residues 30–59 are NMP; it reads STGDMFRDHKARGTEIGKQVQAIMDAGGLV. AMP contacts are provided by residues threonine 31, arginine 36, 57 to 59, 85 to 88, and glutamine 92; these read GLV and GYPR. Residues 126–163 form an LID region; the sequence is GRRSCPRCGAVYHVSQNPPHRAGFCDRDDTALVQREDD. Residue arginine 127 coordinates ATP. Zn(2+) is bound by residues cysteine 130 and cysteine 133. 136–137 is an ATP binding site; sequence VY. Zn(2+) is bound by residues cysteine 150 and aspartate 153. The AMP site is built by arginine 160 and arginine 171. Glycine 199 serves as a coordination point for ATP.

It belongs to the adenylate kinase family. As to quaternary structure, monomer.

It is found in the cytoplasm. It catalyses the reaction AMP + ATP = 2 ADP. It functions in the pathway purine metabolism; AMP biosynthesis via salvage pathway; AMP from ADP: step 1/1. Its function is as follows. Catalyzes the reversible transfer of the terminal phosphate group between ATP and AMP. Plays an important role in cellular energy homeostasis and in adenine nucleotide metabolism. The sequence is that of Adenylate kinase from Anaeromyxobacter sp. (strain K).